We begin with the raw amino-acid sequence, 501 residues long: Lysine--tRNA ligase (501 aa).

Residues Glu410 and Glu417 each contribute to the Mg(2+) site.

The protein belongs to the class-II aminoacyl-tRNA synthetase family. In terms of assembly, homodimer. It depends on Mg(2+) as a cofactor.

It localises to the cytoplasm. The enzyme catalyses tRNA(Lys) + L-lysine + ATP = L-lysyl-tRNA(Lys) + AMP + diphosphate. The polypeptide is Lysine--tRNA ligase (Shewanella halifaxensis (strain HAW-EB4)).